The chain runs to 231 residues: E3 ubiquitin-protein ligase At3g02290 (231 aa).

The segment covering 103 to 118 (GSSHSHEEVEPLRSDS) has biased composition (basic and acidic residues). The interval 103 to 125 (GSSHSHEEVEPLRSDSDADSESF) is disordered. Residues 181 to 222 (CPTCLEEYTSENPKIVTKCSHHFHLSCIYEWMERSENCPVCG) form an RING-type; atypical zinc finger.

It is found in the cytoplasm. The catalysed reaction is S-ubiquitinyl-[E2 ubiquitin-conjugating enzyme]-L-cysteine + [acceptor protein]-L-lysine = [E2 ubiquitin-conjugating enzyme]-L-cysteine + N(6)-ubiquitinyl-[acceptor protein]-L-lysine.. It functions in the pathway protein modification; protein ubiquitination. Mediates E2-dependent protein ubiquitination. The chain is E3 ubiquitin-protein ligase At3g02290 from Arabidopsis thaliana (Mouse-ear cress).